The chain runs to 35 residues: Thionin NsW2 (35 aa).

Intrachain disulfides connect C4–C32, C12–C30, and C16–C26.

Post-translationally, contains 4 disulfide bonds.

Its subcellular location is the secreted. Functionally, antimicrobial peptide disrupting membranes. Has antibacterial against Gram-positive bacteria S.aureus (MIC=6.5 uM) and B.subtilis (MIC=3.25 uM) but not against Gram-negative bacterium E.coli. Has antifungal activity against C.albicans (MIC=3.25 uM). This is Thionin NsW2 from Nigella sativa (Black cumin).